Reading from the N-terminus, the 149-residue chain is Large ribosomal subunit protein uL13 (149 aa).

This sequence belongs to the universal ribosomal protein uL13 family. As to quaternary structure, part of the 50S ribosomal subunit.

Its function is as follows. This protein is one of the early assembly proteins of the 50S ribosomal subunit, although it is not seen to bind rRNA by itself. It is important during the early stages of 50S assembly. The sequence is that of Large ribosomal subunit protein uL13 from Saccharolobus solfataricus (strain ATCC 35092 / DSM 1617 / JCM 11322 / P2) (Sulfolobus solfataricus).